The sequence spans 273 residues: MSNAPLANQSLQDFVARHQRLFVLTGAGCSTNSGIPDYRDSHGNWKRTQPVNFQAFMSEEHTRRRYWARSLIGWRRFGQARPNDAHHALARLEANGRCGMLLTQNVDRLHQSAGHRQVIDLHGRLDLVRCMGCGAKTPRSEFQDTLGRANAEWLALDASDAPDGDADLEHADFSSFKVPACEACGGILKPDVVFFGENVPRDVVATAQDHLSQADAMLIVGSSLMVYSGFRFVQAAAQRQIPIAAVNLGRTRADDLLTLKVEERCEAALAFLL.

The Deacetylase sirtuin-type domain maps to 1–273; the sequence is MSNAPLANQS…RCEAALAFLL (273 aa). NAD(+) is bound by residues 26–46 and 104–107; these read GAGC…GNWK and QNVD. The active-site Proton acceptor is the H122. Residues C130, C133, C181, and C184 each coordinate Zn(2+). NAD(+)-binding positions include 221–223, 247–249, and C265; these read GSS and NLG.

Belongs to the sirtuin family. Class II subfamily. It depends on Zn(2+) as a cofactor.

The protein localises to the cytoplasm. The catalysed reaction is N(6)-acetyl-L-lysyl-[protein] + NAD(+) + H2O = 2''-O-acetyl-ADP-D-ribose + nicotinamide + L-lysyl-[protein]. NAD-dependent protein deacetylase which modulates the activities of several enzymes which are inactive in their acetylated form. The chain is NAD-dependent protein deacetylase 2 from Bradyrhizobium diazoefficiens (strain JCM 10833 / BCRC 13528 / IAM 13628 / NBRC 14792 / USDA 110).